The primary structure comprises 643 residues: Coiled-coil domain-containing protein 8 (643 aa).

The disordered stretch occupies residues 93 to 124 (VGTYDSSNGSDSELSDFDTSKVKGNRGSGKTR). 2 positions are modified to phosphoserine: serine 141 and serine 144. 5 disordered regions span residues 156–191 (RRGE…KGDR), 206–492 (QRVR…TPRA), 519–540 (IDSQ…NQRV), 553–577 (DQRE…ARKQ), and 603–643 (PRLP…EEQL). The span at 218-227 (EVGQAQQSSI) shows a compositional bias: polar residues. The span at 230–247 (RAGEMRHSHTSPDLDDSS) shows a compositional bias: basic and acidic residues. Residues 248–259 (RNTGDLSDQTLI) show a composition bias toward polar residues. Positions 261-276 (RRWKPKIKWVSLRRCR) are enriched in basic residues. 3 stretches are compositionally biased toward low complexity: residues 294–399 (AAEN…AEAA), 409–432 (NPRT…EATA), and 459–473 (RVEA…AAAS). Residues 528–537 (VNQSTGATEN) show a composition bias toward polar residues. Residues 603–609 (PRLPTLP) carry the PxLPxI/L motif; mediates interaction with ANKRA2 motif. Positions 626–643 (LRADTRADMEHREQEEQL) are enriched in basic and acidic residues.

Component of the 3M complex, composed of core components CUL7, CCDC8 and OBSL1. Interacts (via PxLPxI/L motif) with ANKRA2 (via ankyrin repeats); may link the 3M complex to histone deacetylases including HDAC4 and HDAC5.

It localises to the cytoplasm. Its subcellular location is the cytoskeleton. The protein localises to the microtubule organizing center. It is found in the centrosome. Core component of the 3M complex, a complex required to regulate microtubule dynamics and genome integrity. It is unclear how the 3M complex regulates microtubules, it could act by controlling the level of a microtubule stabilizer. Required for localization of CUL7 to the centrosome. This chain is Coiled-coil domain-containing protein 8 (Ccdc8), found in Rattus norvegicus (Rat).